A 227-amino-acid chain; its full sequence is Orotate phosphoribosyltransferase 2 (227 aa).

41 to 42 is an orotate binding site; sequence FF. Residues 79 to 80, R109, K110, K113, H115, and 135 to 143 each bind 5-phospho-alpha-D-ribose 1-diphosphate; these read YK and DDVMTAGTA. Orotate-binding residues include T139 and R167.

It belongs to the purine/pyrimidine phosphoribosyltransferase family. PyrE subfamily. As to quaternary structure, homodimer.

It carries out the reaction orotidine 5'-phosphate + diphosphate = orotate + 5-phospho-alpha-D-ribose 1-diphosphate. It functions in the pathway pyrimidine metabolism; UMP biosynthesis via de novo pathway; UMP from orotate: step 1/2. Catalyzes the transfer of a ribosyl phosphate group from 5-phosphoribose 1-diphosphate to orotate, leading to the formation of orotidine monophosphate (OMP). The sequence is that of Orotate phosphoribosyltransferase 2 (URA10) from Saccharomyces cerevisiae (strain ATCC 204508 / S288c) (Baker's yeast).